We begin with the raw amino-acid sequence, 302 residues long: Tritrans,polycis-undecaprenyl-diphosphate synthase (geranylgeranyl-diphosphate specific) (302 aa).

D33 is an active-site residue. Residue D33 coordinates Mg(2+). Substrate is bound by residues 34–37 (GNRR) and 78–80 (STE). N81 serves as the catalytic Proton acceptor. Substrate is bound by residues F82, R84, R203, and 209–211 (RTS).

Belongs to the UPP synthase family. In terms of assembly, homodimer. The cofactor is Mg(2+).

It catalyses the reaction geranylgeranyl diphosphate + 7 isopentenyl diphosphate = tri-trans,hepta-cis-undecaprenyl diphosphate + 7 diphosphate. Catalyzes the sequential condensation of isopentenyl diphosphate (IPP) with geranylgeranyl diphosphate (GGPP) to yield (2Z,6Z,10Z,14Z,18Z,22Z,26Z,30E,34E,38E)-undecaprenyl diphosphate (tritrans,heptacis-UPP). It is probably the precursor of glycosyl carrier lipids. This chain is Tritrans,polycis-undecaprenyl-diphosphate synthase (geranylgeranyl-diphosphate specific), found in Halobacterium salinarum (strain ATCC 700922 / JCM 11081 / NRC-1) (Halobacterium halobium).